The primary structure comprises 78 residues: MSRVCQVTGKRPVTGNNRSHALNATKRRFLPNLHSHRFWVESEKRFVTLRVSAKGMRVIDKKGIDTVLAELRARSEKY.

The protein belongs to the bacterial ribosomal protein bL28 family.

The sequence is that of Large ribosomal subunit protein bL28 from Shigella boydii serotype 4 (strain Sb227).